The chain runs to 1412 residues: DNA-directed RNA polymerase subunit beta' (1412 aa).

Positions 70, 72, 85, and 88 each coordinate Zn(2+). 3 residues coordinate Mg(2+): Asp-460, Asp-462, and Asp-464. Zn(2+)-binding residues include Cys-819, Cys-893, Cys-900, and Cys-903. The segment at 1393 to 1412 is disordered; sequence EAFEFGTPSAPAEEPQHPAE.

The protein belongs to the RNA polymerase beta' chain family. As to quaternary structure, the RNAP catalytic core consists of 2 alpha, 1 beta, 1 beta' and 1 omega subunit. When a sigma factor is associated with the core the holoenzyme is formed, which can initiate transcription. Mg(2+) is required as a cofactor. Zn(2+) serves as cofactor.

It carries out the reaction RNA(n) + a ribonucleoside 5'-triphosphate = RNA(n+1) + diphosphate. In terms of biological role, DNA-dependent RNA polymerase catalyzes the transcription of DNA into RNA using the four ribonucleoside triphosphates as substrates. This is DNA-directed RNA polymerase subunit beta' from Burkholderia pseudomallei (strain 1106a).